Here is a 182-residue protein sequence, read N- to C-terminus: UPF0690 protein C1orf52 (182 aa).

Disordered stretches follow at residues 1 to 67 (MAAE…RSVT) and 100 to 182 (WKSN…KKKK). A compositionally biased stretch (acidic residues) spans 23–32 (SDEEDNIEPE). The segment covering 50–63 (NKAEKRLPGPDELF) has biased composition (basic and acidic residues). Position 67 is a phosphothreonine (Thr-67). Tyr-132 carries the post-translational modification Phosphotyrosine. A compositionally biased stretch (acidic residues) spans 151-162 (EGEETLESDDEK). Ser-158 is modified (phosphoserine). Basic and acidic residues predominate over residues 172 to 182 (VEPGEPAKKKK).

Belongs to the UPF0690 family. As to expression, expressed in all tissues tested including heart, placenta, liver, skeletal muscle, kidney and pancreas. Weak expression in brain and lung.

The sequence is that of UPF0690 protein C1orf52 (C1orf52) from Homo sapiens (Human).